Here is a 243-residue protein sequence, read N- to C-terminus: Probable transcriptional regulatory protein BB_0025 (243 aa).

The protein belongs to the TACO1 family.

It localises to the cytoplasm. This is Probable transcriptional regulatory protein BB_0025 from Borreliella burgdorferi (strain ATCC 35210 / DSM 4680 / CIP 102532 / B31) (Borrelia burgdorferi).